The sequence spans 195 residues: Imidazoleglycerol-phosphate dehydratase (195 aa).

The protein belongs to the imidazoleglycerol-phosphate dehydratase family.

It is found in the cytoplasm. It carries out the reaction D-erythro-1-(imidazol-4-yl)glycerol 3-phosphate = 3-(imidazol-4-yl)-2-oxopropyl phosphate + H2O. It functions in the pathway amino-acid biosynthesis; L-histidine biosynthesis; L-histidine from 5-phospho-alpha-D-ribose 1-diphosphate: step 6/9. In Geobacillus sp. (strain WCH70), this protein is Imidazoleglycerol-phosphate dehydratase.